The following is a 435-amino-acid chain: Monodictyphenone cluster transcription factor (435 aa).

The segment at residues 23-50 is a DNA-binding region (zn(2)-C6 fungal-type); it reads CHACALSKLKCSQDKPTCSRCVKRGTAC. Residues 117-147 are disordered; sequence QYHQRTPSYPESIPSLLSSTGPGTSATSPLT. Residues 130–147 are compositionally biased toward low complexity; the sequence is PSLLSSTGPGTSATSPLT.

It is found in the nucleus. In terms of biological role, transcription factor that regulates the expression of the gene cluster that mediates the biosynthesis of monodictyphenone, a prenyl xanthone derivative. This is Monodictyphenone cluster transcription factor from Emericella nidulans (strain FGSC A4 / ATCC 38163 / CBS 112.46 / NRRL 194 / M139) (Aspergillus nidulans).